The following is a 310-amino-acid chain: Methionyl-tRNA formyltransferase (310 aa).

Residue 110–113 coordinates (6S)-5,6,7,8-tetrahydrofolate; it reads SLLP.

The protein belongs to the Fmt family.

It carries out the reaction L-methionyl-tRNA(fMet) + (6R)-10-formyltetrahydrofolate = N-formyl-L-methionyl-tRNA(fMet) + (6S)-5,6,7,8-tetrahydrofolate + H(+). Functionally, attaches a formyl group to the free amino group of methionyl-tRNA(fMet). The formyl group appears to play a dual role in the initiator identity of N-formylmethionyl-tRNA by promoting its recognition by IF2 and preventing the misappropriation of this tRNA by the elongation apparatus. This is Methionyl-tRNA formyltransferase from Halorhodospira halophila (strain DSM 244 / SL1) (Ectothiorhodospira halophila (strain DSM 244 / SL1)).